The chain runs to 160 residues: Small ribosomal subunit protein uS7 (160 aa).

This sequence belongs to the universal ribosomal protein uS7 family. In terms of assembly, part of the 30S ribosomal subunit. Contacts proteins S9 and S11.

One of the primary rRNA binding proteins, it binds directly to 16S rRNA where it nucleates assembly of the head domain of the 30S subunit. Is located at the subunit interface close to the decoding center, probably blocks exit of the E-site tRNA. In Ehrlichia chaffeensis (strain ATCC CRL-10679 / Arkansas), this protein is Small ribosomal subunit protein uS7.